The sequence spans 1157 residues: MTLHAYLGRAGTGKSTKMLTEIKQKMKADPLGDPIILIAPTQSTFQLEQAFVNDPELNGSLRTEVLHFERLSHRIFQEVGSYSEQKLSKAATEMMIYNIVQEQQKYLKLYQSQAKYYGFSEKLTEQIQDFKKYAVTPEHLEHFIADKNMQTRTKNKLEDIALIYREFEQRIQNEFITGEDSLQYFIDCMPKSEWLKRADIYIDGFHNFSTIEYLIIKGLIKYAKSVTIILTTDGNHDQFSLFRKPSEVLRHIEEIANELNISIERQYFNQLYRFNNQDLKHLEQEFDVLQINRVACQGHINILESATMREEINEIARRIIVDIRDKQLRYQDIAILYRDESYAYLFDSILPLYNIPYNIDTKRSMTHHPVMEMIRSLIEVIQSNWQVNPMLRLLKTDVLTASYLKSAYLVDLLENFVLERGIYGKRWLDDELFNVEHFSKMGRKAHKLTEDERNTFEQVVKLKKDVIDKILHFEKQMSQAETVKDFATAFYESMEYFELPNQLMTERDELDLNGNHEKAEEIDQIWNGLIQILDDLVLVFGDEPMSMERFLEVFDIGLEQLEFVMIPQTLDQVSIGTMDLAKVDNKQHVYLVGMNDGTMPQPVTASSLITDEEKKYFEQQANVELSPTSDILQMDEAFVCYVAMTRAKGDVTFSYSLMGSSGDDKEISPFLNQIQSLFNQLEITNIPQYHEVNPLSLMQHAKQTKITLFEALRAWLDDEIVADSWLDAYQVIRDSDHLNQGLDYLMSALTFDNETVKLGETLSKDLYGKEINASVSRFEGYQQCPFKHYASHGLKLNERTKYELQNFDLGDIFHSVLKYISERINGDFKQLDLKKIRQLTNEALEEILPKVQFNLLNSSAYYRYLSRRIGAIVETTLSALKYQGTYSKFMPKHFETSFRRKPRTNDELIAQTLTTTQGIPINIRGQIDRIDTYTKNDTSFVNIIDYKSSEGSATLDLTKVYYGMQMQMMTYMDIVLQNKQRLGLTDIVKPGGLLYFHVHEPRIKFKSWSDIDEDKLEQDLIKKFKLSGLVNADQTVIDALDIRLEPKFTSDIVPVGLNKDGSLSKRGSQVADEATIYKFIQHNKENFIETASNIMDGHTEVAPLKYKQKLPCAFCSYQSVCHVDGMIDSKRYRTVDETINPIEAIQNININDEFGGE.

The region spanning 1–275 (MTLHAYLGRA…QYFNQLYRFN (275 aa)) is the UvrD-like helicase ATP-binding domain. 8–15 (GRAGTGKS) is an ATP binding site. In terms of domain architecture, UvrD-like helicase C-terminal spans 269-583 (NQLYRFNNQD…SIGTMDLAKV (315 aa)). [4Fe-4S] cluster is bound by residues C784, C1112, C1115, and C1121.

The protein belongs to the helicase family. AddB/RexB type 1 subfamily. As to quaternary structure, heterodimer of AddA and AddB. Mg(2+) is required as a cofactor. [4Fe-4S] cluster serves as cofactor.

The heterodimer acts as both an ATP-dependent DNA helicase and an ATP-dependent, dual-direction single-stranded exonuclease. Recognizes the chi site generating a DNA molecule suitable for the initiation of homologous recombination. The AddB subunit has 5' -&gt; 3' nuclease activity but not helicase activity. This Staphylococcus aureus (strain JH9) protein is ATP-dependent helicase/deoxyribonuclease subunit B.